Consider the following 2293-residue polypeptide: Protein Ycf2 A (2293 aa).

An ATP-binding site is contributed by 1647-1654 (GSIGTGRS).

This sequence belongs to the Ycf2 family.

The protein localises to the plastid. It is found in the chloroplast stroma. In terms of biological role, probable ATPase of unknown function. Its presence in a non-photosynthetic plant (Epifagus virginiana) and experiments in tobacco indicate that it has an essential function which is probably not related to photosynthesis. The sequence is that of Protein Ycf2 A from Crucihimalaya wallichii (Rock-cress).